A 190-amino-acid chain; its full sequence is Potassium-transporting ATPase KdpC subunit (190 aa).

The helical transmembrane segment at 10-30 (TFIFLLLITGGVYPLLTTALG) threads the bilayer.

The protein belongs to the KdpC family. In terms of assembly, the system is composed of three essential subunits: KdpA, KdpB and KdpC.

The protein localises to the cell inner membrane. Its function is as follows. Part of the high-affinity ATP-driven potassium transport (or Kdp) system, which catalyzes the hydrolysis of ATP coupled with the electrogenic transport of potassium into the cytoplasm. This subunit acts as a catalytic chaperone that increases the ATP-binding affinity of the ATP-hydrolyzing subunit KdpB by the formation of a transient KdpB/KdpC/ATP ternary complex. This chain is Potassium-transporting ATPase KdpC subunit, found in Escherichia coli O157:H7.